Here is a 286-residue protein sequence, read N- to C-terminus: Interferon-induced 35 kDa protein (286 aa).

Residues 5–26 (LDAALHALQEEQARLKMRLWDL) form a leucine-zipper region. NID domains are found at residues 81 to 170 (ALIT…GDVD) and 183 to 266 (FARD…GEVE).

This sequence belongs to the NMI family. As to quaternary structure, homodimer. Also interacts with BATF. Interacts with TRIM21. Interacts with NMI; the interaction is direct and is facilitated by TRIM21. Phosphorylated. Dephosphorylation correlates with the formation of a complex with NMI. In terms of tissue distribution, expressed in a wide range of cell types, including fibroblasts, macrophages, and epithelial cells.

It is found in the cytoplasm. The protein localises to the nucleus. The protein resides in the secreted. Functionally, acts as a signaling pathway regulator involved in innate immune system response. In response to interferon IFN-alpha, associates in a complex with signaling pathway regulator NMI to regulate immune response; the complex formation prevents proteasome-mediated degradation of IFI35 and correlates with IFI35 dephosphorylation. In complex with NMI, inhibits virus-triggered type I interferon/IFN-beta production. In complex with NMI, negatively regulates nuclear factor NF-kappa-B signaling by inhibiting the nuclear translocation, activation and transcription of the NF-kappa-B subunit p65/RELA, resulting in the inhibition of endothelial cell proliferation, migration and re-endothelialization of injured arteries. Beside its role as an intracellular signaling pathway regulator, also functions extracellularly as damage-associated molecular patterns (DAMPs) to promote inflammation when actively released by macrophage to the extracellular space during cell injury and pathogen invasion. Macrophage-secreted IFI35 activates NF-kappa-B signaling in adjacent macrophages through Toll-like receptor 4/TLR4 activation, thereby inducing NF-kappa-B translocation from the cytoplasm into the nucleus which promotes the release of pro-inflammatory cytokines. This is Interferon-induced 35 kDa protein from Homo sapiens (Human).